Consider the following 612-residue polypeptide: MDKTVSQRLGQGTLHQKLKRIMEKSTILSNWTKESEEKMKFDFSCELYRMSTYSAFPRGVPVSERSLARAGFYYTGVNDKVKCFCCGLMLDNWKQGDSPVEKHRQFYPSCSFVQTLLSASLQSPSKNMSPVKSRFAHSSPLERGGIHSNLCSSPLNSRAVEDFSSRMDPCSYAMSTEEARFLTYSMWPLSFLSPAELARAGFYYIGPGDRVACFACGGKLSNWEPKDDAMSEHRRHFPHCPFLENTSETQRFSISNLSMQTHSARLRTFLYWPPSVPVQPEQLASAGFYYVDRNDDVKCFCCDGGLRCWEPGDDPWIEHAKWFPRCEFLIRMKGQEFVDEIQARYPHLLEQLLSTSDTPGEENADPTETVVHFGPGESSEDVVMMSTPVVKAALEMGFSRSLVRQTVQRQILATGENYRTVNDIVSVLLNAEDERREEEKERQTEEMASGDLSLIRKNRMALFQQLTHVLPILDNLLEASVITKQEHDIIRQKTQIPLQARELIDTVLVKGNAAANIFKNSLKEIDSTLYENLFVEKNMKYIPTEDVSGLSLEEQLRRLQEERTCKVCMDREVSIVFIPCGHLVVCQECAPSLRKCPICRGTIKGTVRTFLS.

The stretch at glutamate 46 to valine 113 is one BIR 1 repeat. Arginine 143 is modified (omega-N-methylarginine). Position 153 is a phosphoserine (serine 153). BIR repeat units follow at residues glutamate 177–leucine 243 and histidine 262–leucine 329. The Zn(2+) site is built by cysteine 299, cysteine 302, histidine 319, and cysteine 326. The CARD domain occupies methionine 447–lysine 537. Residues cysteine 565–arginine 600 form an RING-type zinc finger.

This sequence belongs to the IAP family. Interacts with DIABLO/SMAC and with PRSS25; these interactions inhibit apoptotic suppressor activity. Interacts with CASP9. Interacts (via BIR domains) with TRAF2; the interaction is required for IKBKE ubiquitination. Interacts with E2F1, RIPK1, RIPK2, RIPK3, RIPK4, BIRC5/survivin and USP19. Interacts with HSP90AB1. Interacts with several death receptors, inclusing FAS, TNFRSF10A and TNFRSF10B. Recruited to TNFRSF10B in the absence of receptor stimulation. When TNFRSF10B is stimulated, further recruited to the receptor and cleaved by caspases. Proteolytic fragments remain associated with TNFRSF10B. Post-translationally, auto-ubiquitinated and degraded by the proteasome in apoptotic cells. In terms of processing, upon stimulation of death receptors, including TNFRSF10B, recruited to receptors and cleaved by caspases. Proteolytic fragments remain associated with the receptors. This cleavage presumably inactivates the protein. In terms of tissue distribution, expressed in heart, brain, spleen, lung, liver, skeletal muscle, kidney and testis.

Its subcellular location is the cytoplasm. The protein resides in the nucleus. It catalyses the reaction S-ubiquitinyl-[E2 ubiquitin-conjugating enzyme]-L-cysteine + [acceptor protein]-L-lysine = [E2 ubiquitin-conjugating enzyme]-L-cysteine + N(6)-ubiquitinyl-[acceptor protein]-L-lysine.. The CARD domain inhibits the activation of E3 ubiquitin ligase activity by preventing RING domain dimerization and E2 ubiquitin donor binding and activation. The CARD domain-mediated autoinhibition of the E3 ubiquitin-protein ligase activity suppresses cell proliferation and migration. USP19 regulates the stability of BIRC2/c-IAP1 by preventing its ubiquitination. Its function is as follows. Multi-functional protein which regulates not only caspases and apoptosis, but also modulates inflammatory signaling and immunity, mitogenic kinase signaling, and cell proliferation, as well as cell invasion and metastasis. Acts as an E3 ubiquitin-protein ligase regulating NF-kappa-B signaling and regulates both canonical and non-canonical NF-kappa-B signaling by acting in opposite directions: acts as a positive regulator of the canonical pathway and suppresses constitutive activation of non-canonical NF-kappa-B signaling. The target proteins for its E3 ubiquitin-protein ligase activity include: RIPK1, RIPK2, RIPK3, RIPK4, CASP3, CASP7, CASP8, TRAF2, DIABLO/SMAC, MAP3K14/NIK, MAP3K5/ASK1, IKBKG/NEMO, IKBKE and MXD1/MAD1. Can also function as an E3 ubiquitin-protein ligase of the NEDD8 conjugation pathway, targeting effector caspases for neddylation and inactivation. Acts as an important regulator of innate immune signaling via regulation of Toll-like receptors (TLRs), Nodlike receptors (NLRs) and RIG-I like receptors (RLRs), collectively referred to as pattern recognition receptors (PRRs). Protects cells from spontaneous formation of the ripoptosome, a large multi-protein complex that has the capability to kill cancer cells in a caspase-dependent and caspase-independent manner. Suppresses ripoptosome formation by ubiquitinating RIPK1 and CASP8. Can stimulate the transcriptional activity of E2F1. Plays a role in the modulation of the cell cycle. The chain is Baculoviral IAP repeat-containing protein 2 (Birc2) from Mus musculus (Mouse).